Reading from the N-terminus, the 440-residue chain is 3-phosphoshikimate 1-carboxyvinyltransferase (440 aa).

3-phosphoshikimate contacts are provided by lysine 26, serine 27, and arginine 31. Lysine 26 contacts phosphoenolpyruvate. The phosphoenolpyruvate site is built by glycine 99 and arginine 127. 3-phosphoshikimate-binding residues include serine 172, glutamine 174, aspartate 320, and lysine 347. Glutamine 174 contacts phosphoenolpyruvate. The active-site Proton acceptor is aspartate 320. Residues arginine 351 and arginine 392 each contribute to the phosphoenolpyruvate site.

It belongs to the EPSP synthase family. Monomer.

It is found in the cytoplasm. It catalyses the reaction 3-phosphoshikimate + phosphoenolpyruvate = 5-O-(1-carboxyvinyl)-3-phosphoshikimate + phosphate. The protein operates within metabolic intermediate biosynthesis; chorismate biosynthesis; chorismate from D-erythrose 4-phosphate and phosphoenolpyruvate: step 6/7. Its function is as follows. Catalyzes the transfer of the enolpyruvyl moiety of phosphoenolpyruvate (PEP) to the 5-hydroxyl of shikimate-3-phosphate (S3P) to produce enolpyruvyl shikimate-3-phosphate and inorganic phosphate. This is 3-phosphoshikimate 1-carboxyvinyltransferase from Xanthomonas euvesicatoria pv. vesicatoria (strain 85-10) (Xanthomonas campestris pv. vesicatoria).